Reading from the N-terminus, the 474-residue chain is MTKKLHIKTWGCQMNEYDSSKMADLLETTHGFTLTDVAEEADILLLNTCSIREKAQEKVFHQLGRWKTLKEKNPDVIIGVGGCVASQEGDHIRDRARYVDIIFGPQTLHRLPEMINQVKGTRSPVVDISFPEIEKFDRLPEPRAEGPTAFVSIMEGCNKYCTYCVVPYTRGEEVSRPSDDIVLEIAQLAAQGVREVNLLGQNVNAWRGENYDGTTGTFADLLRLVAAIDGIDRIRFTTSHPIEFTDDIIEVYRDTPELVSFLHLPVQSGSDRVLNMMGRTHTALEYKAIIRKLRAARPDIQISSDFIVGFPGETQQDFEQTMKLIAEVNFDMSYSFIFSARPGTPAADMVDDVPEEEKKQRLYILQERINQQAMAWSRRMLGTTQRILVEGTSRKSIMELSGRTENNRVVNFEGSPDMVGKFVDVEITEVFPNSLRGKVIRTEDEMGLRVVESPESIIARTRKENELGVGIFQP.

Positions 3 to 120 constitute an MTTase N-terminal domain; sequence KKLHIKTWGC…LPEMINQVKG (118 aa). 6 residues coordinate [4Fe-4S] cluster: cysteine 12, cysteine 49, cysteine 83, cysteine 157, cysteine 161, and cysteine 164. Positions 143–375 constitute a Radical SAM core domain; sequence RAEGPTAFVS…QERINQQAMA (233 aa). The region spanning 378–441 is the TRAM domain; it reads RRMLGTTQRI…PNSLRGKVIR (64 aa).

This sequence belongs to the methylthiotransferase family. MiaB subfamily. As to quaternary structure, monomer. [4Fe-4S] cluster is required as a cofactor.

It localises to the cytoplasm. It catalyses the reaction N(6)-dimethylallyladenosine(37) in tRNA + (sulfur carrier)-SH + AH2 + 2 S-adenosyl-L-methionine = 2-methylsulfanyl-N(6)-dimethylallyladenosine(37) in tRNA + (sulfur carrier)-H + 5'-deoxyadenosine + L-methionine + A + S-adenosyl-L-homocysteine + 2 H(+). Catalyzes the methylthiolation of N6-(dimethylallyl)adenosine (i(6)A), leading to the formation of 2-methylthio-N6-(dimethylallyl)adenosine (ms(2)i(6)A) at position 37 in tRNAs that read codons beginning with uridine. The polypeptide is tRNA-2-methylthio-N(6)-dimethylallyladenosine synthase (Cronobacter sakazakii (strain ATCC BAA-894) (Enterobacter sakazakii)).